A 1769-amino-acid chain; its full sequence is Gamma-tubulin complex component 6 (1769 aa).

3 disordered regions span residues 809–842, 859–881, and 1284–1360; these read EAQQ…HSCD, STPS…PFST, and TVCS…AEAR. Positions 820–831 are enriched in polar residues; that stretch reads FPSTGSQVTSTG. Residues 1314 to 1326 are compositionally biased toward basic and acidic residues; the sequence is PEEKGPGKSRDAE. The span at 1332 to 1343 shows a compositional bias: polar residues; the sequence is LPSSSQEDTAVP.

Belongs to the TUBGCP family. Component of the gamma-tubulin ring complex (gTuRC) consisting of TUBGCP2, TUBGCP3, TUBGCP4, TUBGCP5 and TUBGCP6 and gamma-tubulin TUBG1 or TUBG2. TUBGCP2, TUBGCP3, TUBGCP4, TUBGCP5 and TUBGCP6 assemble in a 5:5:2:1:1 stoichiometry; each is associated with a gamma-tubulin, thereby arranging 14 gamma-tubulins in a helical manner. Gamma-tubulin at the first position is blocked by TUBGCP3 at the last position, allowing 13 protafilaments to grow into a microtubule. The gTuRC (via TUBGCP3 and TUBGCP6) interacts with ACTB and MZT1; the interactions form a luminal bridge that stabilizes the initial structure during complex assembly. The gTuRC (via TUBGCP2) interacts with MZT2A/MZT2B and CDK5RAP2 (via CM1 motif); the interactions play a role in gTuRC activation.

The protein localises to the cytoplasm. Its subcellular location is the cytoskeleton. The protein resides in the microtubule organizing center. It localises to the centrosome. Functionally, component of the gamma-tubulin ring complex (gTuRC) which mediates microtubule nucleation. The gTuRC regulates the minus-end nucleation of alpha-beta tubulin heterodimers that grow into microtubule protafilaments, a critical step in centrosome duplication and spindle formation. In Mus musculus (Mouse), this protein is Gamma-tubulin complex component 6 (Tubgcp6).